A 502-amino-acid chain; its full sequence is NAD(P)H-quinone oxidoreductase chain 4, chloroplastic (502 aa).

14 helical membrane passes run Phe4–Leu24, Ile37–Leu57, Leu87–Val107, Leu113–Ser130, Leu134–Met154, Phe167–Leu187, Ile213–His233, His244–Ile264, Ala274–Ala294, Met315–Leu335, Gln336–Asp356, Leu388–Thr408, Leu419–Leu439, and Leu464–Val484.

The protein belongs to the complex I subunit 4 family.

Its subcellular location is the plastid. The protein localises to the chloroplast thylakoid membrane. It catalyses the reaction a plastoquinone + NADH + (n+1) H(+)(in) = a plastoquinol + NAD(+) + n H(+)(out). It carries out the reaction a plastoquinone + NADPH + (n+1) H(+)(in) = a plastoquinol + NADP(+) + n H(+)(out). The chain is NAD(P)H-quinone oxidoreductase chain 4, chloroplastic from Lolium perenne (Perennial ryegrass).